A 278-amino-acid chain; its full sequence is Large ribosomal subunit protein uL2 (278 aa).

A disordered region spans residues 218-278 (RPHNRGVVMN…IMRSRHQRKK (61 aa)).

The protein belongs to the universal ribosomal protein uL2 family. Part of the 50S ribosomal subunit. Forms a bridge to the 30S subunit in the 70S ribosome.

One of the primary rRNA binding proteins. Required for association of the 30S and 50S subunits to form the 70S ribosome, for tRNA binding and peptide bond formation. It has been suggested to have peptidyltransferase activity; this is somewhat controversial. Makes several contacts with the 16S rRNA in the 70S ribosome. The sequence is that of Large ribosomal subunit protein uL2 from Rhizobium etli (strain CIAT 652).